The chain runs to 269 residues: Small ribosomal subunit protein uS2 (269 aa).

Residues 228–269 (QLDSDDDYEEFDESLAEGDYDDYDEEEDEDSETVSSQEGEEE) form a disordered region. Acidic residues predominate over residues 230–269 (DSDDDYEEFDESLAEGDYDDYDEEEDEDSETVSSQEGEEE).

It belongs to the universal ribosomal protein uS2 family.

This is Small ribosomal subunit protein uS2 from Crocosphaera subtropica (strain ATCC 51142 / BH68) (Cyanothece sp. (strain ATCC 51142)).